Here is a 269-residue protein sequence, read N- to C-terminus: CUE domain-containing protein 2-B (269 aa).

Residues 110–130 (ASPSEKTATEPLEGAVAQDKD) form a disordered region. In terms of domain architecture, CUE spans 131 to 174 (DPKTGVDLLLEIFPSCTITQAQTALSMAKGDLEDAVQIIVDGKV).

The protein belongs to the CUEDC2 family. In terms of processing, phosphorylated.

It localises to the cytoplasm. Its subcellular location is the nucleus. May play a role in targeting proteins for ubiquitination and subsequent proteasomal degradation. This Xenopus laevis (African clawed frog) protein is CUE domain-containing protein 2-B (cuedc2-b).